A 294-amino-acid polypeptide reads, in one-letter code: Proteasome subunit beta 1 (294 aa).

A propeptide spans 1–65 (MTADRPALRT…MESGDLAPHG (65 aa)) (removed in mature form; by autocatalysis). Residue Thr66 is the Nucleophile of the active site.

It belongs to the peptidase T1B family. In terms of assembly, the 20S proteasome core is composed of 14 alpha and 14 beta subunits that assemble into four stacked heptameric rings, resulting in a barrel-shaped structure. The two inner rings, each composed of seven catalytic beta subunits, are sandwiched by two outer rings, each composed of seven alpha subunits. All four combinations of alpha- and beta-subunits (beta2-alpha1, beta2-alpha2, beta1-alpha2 and beta1-alpha1) yield fully assembled and proteolytically active proteasomes. The catalytic chamber with the active sites is on the inside of the barrel. Has probably a gated structure, the ends of the cylinder being occluded by the N-termini of the alpha-subunits. Is likely capped by the proteasome-associated ATPase, ARC.

It is found in the cytoplasm. The enzyme catalyses Cleavage of peptide bonds with very broad specificity.. It participates in protein degradation; proteasomal Pup-dependent pathway. Its activity is regulated as follows. The formation of the proteasomal ATPase ARC-20S proteasome complex, likely via the docking of the C-termini of ARC into the intersubunit pockets in the alpha-rings, may trigger opening of the gate for substrate entry. Interconversion between the open-gate and close-gate conformations leads to a dynamic regulation of the 20S proteasome proteolysis activity. Its function is as follows. Component of the proteasome core, a large protease complex with broad specificity involved in protein degradation. The R.erythropolis proteasomes are able to cleave oligopeptides after Tyr, Phe and Leu, very poorly after Arg but not after Glu. Thus, displays chymotrypsin-like activity, low trypsin-like activity but no caspase-like activity. This Rhodococcus erythropolis (Arthrobacter picolinophilus) protein is Proteasome subunit beta 1.